Reading from the N-terminus, the 396-residue chain is Elongation factor Tu (396 aa).

Residues K10–E206 form the tr-type G domain. Residues G19 to T26 are G1. Residue G19 to T26 participates in GTP binding. T26 is a binding site for Mg(2+). Residues G60 to S64 are G2. Positions D81–G84 are G3. GTP is bound by residues D81–H85 and N136–D139. The G4 stretch occupies residues N136–D139. The interval S174–L176 is G5.

Belongs to the TRAFAC class translation factor GTPase superfamily. Classic translation factor GTPase family. EF-Tu/EF-1A subfamily. Monomer.

It is found in the cytoplasm. It carries out the reaction GTP + H2O = GDP + phosphate + H(+). GTP hydrolase that promotes the GTP-dependent binding of aminoacyl-tRNA to the A-site of ribosomes during protein biosynthesis. The chain is Elongation factor Tu from Afipia carboxidovorans (strain ATCC 49405 / DSM 1227 / KCTC 32145 / OM5) (Oligotropha carboxidovorans).